The following is a 316-amino-acid chain: Probable cell division protein WhiA (316 aa).

A DNA-binding region (H-T-H motif) is located at residues 277–310 (SLEQLGRLADPPITKDAIAGRIRRLLQLAEKTEK).

It belongs to the WhiA family.

Involved in cell division and chromosome segregation. The protein is Probable cell division protein WhiA of Bifidobacterium adolescentis (strain ATCC 15703 / DSM 20083 / NCTC 11814 / E194a).